Consider the following 284-residue polypeptide: Bifunctional protein FolD (284 aa).

Residues 166-168 (GAS) and Ile-232 contribute to the NADP(+) site.

This sequence belongs to the tetrahydrofolate dehydrogenase/cyclohydrolase family. As to quaternary structure, homodimer.

It carries out the reaction (6R)-5,10-methylene-5,6,7,8-tetrahydrofolate + NADP(+) = (6R)-5,10-methenyltetrahydrofolate + NADPH. The enzyme catalyses (6R)-5,10-methenyltetrahydrofolate + H2O = (6R)-10-formyltetrahydrofolate + H(+). Its pathway is one-carbon metabolism; tetrahydrofolate interconversion. In terms of biological role, catalyzes the oxidation of 5,10-methylenetetrahydrofolate to 5,10-methenyltetrahydrofolate and then the hydrolysis of 5,10-methenyltetrahydrofolate to 10-formyltetrahydrofolate. This chain is Bifunctional protein FolD, found in Shewanella pealeana (strain ATCC 700345 / ANG-SQ1).